Reading from the N-terminus, the 250-residue chain is NAD(P)H-hydrate epimerase (250 aa).

The region spanning 14 to 238 is the YjeF N-terminal domain; that stretch reads AAALDVELMS…SIAEKYGIQK (225 aa). Position 74–78 (74–78) interacts with (6S)-NADPHX; the sequence is NNGGD. Positions 75 and 143 each coordinate K(+). Residues 147–154, Tyr-159, and Asp-180 contribute to the (6S)-NADPHX site; that span reads GFSFHGTA. Ser-183 provides a ligand contact to K(+).

It belongs to the NnrE/AIBP family. Requires K(+) as cofactor.

It catalyses the reaction (6R)-NADHX = (6S)-NADHX. The catalysed reaction is (6R)-NADPHX = (6S)-NADPHX. Catalyzes the epimerization of the S- and R-forms of NAD(P)HX, a damaged form of NAD(P)H that is a result of enzymatic or heat-dependent hydration. This is a prerequisite for the S-specific NAD(P)H-hydrate dehydratase to allow the repair of both epimers of NAD(P)HX. This is NAD(P)H-hydrate epimerase from Thalassiosira pseudonana (Marine diatom).